Here is a 320-residue protein sequence, read N- to C-terminus: 33 kDa chaperonin (320 aa).

A compositionally biased stretch (basic and acidic residues) spans 1–17 (MTDASGSERLKRTKDIS). The interval 1–27 (MTDASGSERLKRTKDISESTPPSSLPD) is disordered. 2 disulfide bridges follow: cysteine 262-cysteine 264 and cysteine 295-cysteine 298.

The protein belongs to the HSP33 family. Post-translationally, under oxidizing conditions two disulfide bonds are formed involving the reactive cysteines. Under reducing conditions zinc is bound to the reactive cysteines and the protein is inactive.

The protein localises to the cytoplasm. Functionally, redox regulated molecular chaperone. Protects both thermally unfolding and oxidatively damaged proteins from irreversible aggregation. Plays an important role in the bacterial defense system toward oxidative stress. This is 33 kDa chaperonin from Synechococcus sp. (strain JA-3-3Ab) (Cyanobacteria bacterium Yellowstone A-Prime).